A 467-amino-acid polypeptide reads, in one-letter code: MRFTRYTTPFFSLLLSGCVVGPNYAPPEMPLPAKFSEGGVTSNGDVTVVAWWTAFNDPMLTSYVEQGISQNLDVQQAIERIDLAAANVTIAEASALPDLTLSGSHTVSGQKGKLRKQTYTSNTSTGELSLSWLLDFGVYKRNTESAEAALDAAYASVDMAKLAFINDIISSYVDARYYQRRLALSQANLKSRRETFELTKSKFAAGAVARMDVVRAEGLVQSTLAEIPSLDANFRISAHRIATLLGKPAGSMVEEIAKGSNQPAFRADVNVGIPADIIRNRPDIRKAERDLADSTAQIGVAEAKLFPSITLSGSISPSGGINERGVYGNLTPWSFGPKLKLPILDGGGLRADVDSAKSKATVSYLKWKSRVLNAIEQVENALVAMQREGRTVRALKREVEIAQETLRLSTSSYKDGASSLLDLLEAQRSLSVTQASLARAVQEWAKLYAVLNIAIGSGYNPVAKAGL.

A signal peptide spans 1 to 17; that stretch reads MRFTRYTTPFFSLLLSG. Cys18 carries the N-palmitoyl cysteine lipid modification. The S-diacylglycerol cysteine moiety is linked to residue Cys18.

Belongs to the outer membrane factor (OMF) (TC 1.B.17) family.

It is found in the cell membrane. This chain is Nodulation protein T (nodT), found in Rhizobium leguminosarum bv. trifolii.